The chain runs to 103 residues: uncharacterized protein (103 aa).

A helical membrane pass occupies residues 33–57 (GYVAAIVAGPVSMSPLDWICPLLAI).

Its subcellular location is the membrane. This is an uncharacterized protein from Sinorhizobium fredii (strain NBRC 101917 / NGR234).